The primary structure comprises 233 residues: Nickel import system ATP-binding protein NikE (233 aa).

The region spanning 2-228 (IELKHVTFGY…DRHPYTKELV (227 aa)) is the ABC transporter domain. 35-42 (GESGCGKS) lines the ATP pocket.

This sequence belongs to the ABC transporter superfamily. In terms of assembly, the complex is composed of two ATP-binding proteins (NikD and NikE), two transmembrane proteins (NikB and NikC) and a solute-binding protein (NikA).

The protein resides in the cell membrane. It catalyses the reaction Ni(2+)(out) + ATP + H2O = Ni(2+)(in) + ADP + phosphate + H(+). In terms of biological role, part of the ABC transporter complex NikABCDE (Opp2) involved in nickel import. Probably responsible for energy coupling to the transport system. This is Nickel import system ATP-binding protein NikE from Staphylococcus aureus (strain USA300).